Here is a 1449-residue protein sequence, read N- to C-terminus: DNA polymerase III PolC-type (1449 aa).

The interval 194-231 is disordered; the sequence is AQEKPVKKESSDNKHKSNGGNKGGYEKKSYKDEPKNEN. Basic and acidic residues-rich tracts occupy residues 197–208 and 217–229; these read KPVKKESSDNKH and GYEK…EPKN. The region spanning 435 to 590 is the Exonuclease domain; that stretch reads YVVFDIETTG…DDAKATAEIL (156 aa).

The protein belongs to the DNA polymerase type-C family. PolC subfamily.

The protein localises to the cytoplasm. It carries out the reaction DNA(n) + a 2'-deoxyribonucleoside 5'-triphosphate = DNA(n+1) + diphosphate. Its function is as follows. Required for replicative DNA synthesis. This DNA polymerase also exhibits 3' to 5' exonuclease activity. This is DNA polymerase III PolC-type from Clostridium perfringens (strain 13 / Type A).